The following is a 206-amino-acid chain: Adenine phosphoribosyltransferase (206 aa).

It belongs to the purine/pyrimidine phosphoribosyltransferase family. Homodimer.

The protein resides in the cytoplasm. It carries out the reaction AMP + diphosphate = 5-phospho-alpha-D-ribose 1-diphosphate + adenine. Its pathway is purine metabolism; AMP biosynthesis via salvage pathway; AMP from adenine: step 1/1. In terms of biological role, catalyzes a salvage reaction resulting in the formation of AMP, that is energically less costly than de novo synthesis. This chain is Adenine phosphoribosyltransferase, found in Rhodopirellula baltica (strain DSM 10527 / NCIMB 13988 / SH1).